Consider the following 307-residue polypeptide: Plastid division protein PDV2 (307 aa).

An N-acetylmethionine modification is found at M1. Topologically, residues 1–213 (MEDEEGIGLI…SGGSSHGVIR (213 aa)) are cytoplasmic. The interval 28-66 (SSTTVSDNGDGNEDLSPGEGRKSEIIGNQDKDFDSISSE) is disordered. A compositionally biased stretch (basic and acidic residues) spans 46 to 61 (EGRKSEIIGNQDKDFD). At S50 the chain carries Phosphoserine. A coiled-coil region spans residues 76–103 (LLRIRDALEALESQLASLQNLRQRQQYE). Residues 174–206 (HLPSKKKSDANGFGSGHVRNEAEAKSPNGGSGG) form a disordered region. A helical membrane pass occupies residues 214-234 (FLGSVAKIVLPIIGVISLLSA). The Chloroplast intermembrane portion of the chain corresponds to 235–307 (SGYGPEMRKR…AKRDVTYGYG (73 aa)). An ARC6 binding region spans residues 235–307 (SGYGPEMRKR…AKRDVTYGYG (73 aa)).

In terms of assembly, interacts (via C-terminus) with ARC6 (via C-terminus) in the chloroplast intermembrane space; this interaction induces ARC6 homodimerization and leads to the formation of a heterotetramer containing two ARC6 and two PDV2 subunits. Interacts with ARC5/DRP5B. As to expression, mostly expressed in young leaves.

It is found in the plastid. The protein resides in the chloroplast outer membrane. Its function is as follows. Component of the plastid division machinery consisting in a binary fission accomplished by the simultaneous constriction of the FtsZ ring on the stromal side of the inner envelope membrane, and the ARC5/DRP5B ring on the cytosolic side of the outer envelope membrane. Positive factor of chloroplast division required, with a dosage effect, to mediate the recruitment and dimerization of ARC5/DRP5B at the midplastid constriction site in the cytoplasm at plastid outer envelope membranes (OEMs). Prevents ARC5/DRP5B GTPase acrivity. Relays plastid division site position between stroma and outer surface via interactions with the cytoplasmic ARC5/DRP5B and the inner membrane ARC6 that recruits stromal FtsZ ring. Binding to phosphatidylinositol 4-phosphate (PI4P) modulates negatively chloroplast division. This Arabidopsis thaliana (Mouse-ear cress) protein is Plastid division protein PDV2.